The primary structure comprises 160 residues: SsrA-binding protein (160 aa).

The segment at 131-160 is disordered; it reads KKEYDKRHTERERDSDRELQRAVRSKGKDD.

The protein belongs to the SmpB family.

Its subcellular location is the cytoplasm. Functionally, required for rescue of stalled ribosomes mediated by trans-translation. Binds to transfer-messenger RNA (tmRNA), required for stable association of tmRNA with ribosomes. tmRNA and SmpB together mimic tRNA shape, replacing the anticodon stem-loop with SmpB. tmRNA is encoded by the ssrA gene; the 2 termini fold to resemble tRNA(Ala) and it encodes a 'tag peptide', a short internal open reading frame. During trans-translation Ala-aminoacylated tmRNA acts like a tRNA, entering the A-site of stalled ribosomes, displacing the stalled mRNA. The ribosome then switches to translate the ORF on the tmRNA; the nascent peptide is terminated with the 'tag peptide' encoded by the tmRNA and targeted for degradation. The ribosome is freed to recommence translation, which seems to be the essential function of trans-translation. In Pseudomonas syringae pv. syringae (strain B728a), this protein is SsrA-binding protein.